We begin with the raw amino-acid sequence, 431 residues long: Forkhead box protein P3 (431 aa).

Residues 1–68 form a disordered region; the sequence is MPNPRPGKPS…SSLNPMPPSQ (68 aa). Residues 10 to 25 show a composition bias toward low complexity; sequence SAPSLALGPSPGASPS. Residue Ser-19 is modified to Phosphoserine; by CDK2. Lys-31 is modified (N6-acetyllysine). The Nuclear export signal motif lies at 68-76; it reads QLQLPTLPL. The LXXLL motif motif lies at 92–96; it reads LQALL. An essential for transcriptional repressor activity and for interaction with KAT5 and HDAC7 region spans residues 106 to 190; that stretch reads LSTVDAHART…STLSAMPQSS (85 aa). Residues 149 to 199 are interaction with IKZF4; it reads LPPGINVASLEWVSREPALLCTFPNPGAPRKDSTLSAMPQSSYPLLANGVC. The C2H2-type zinc finger occupies 197 to 222; it reads GVCKWPGCEKVFEEPEDFLKHCQADH. The short motif at 239 to 248 is the Nuclear export signal element; it reads VQSLEQQLVL. The leucine-zipper stretch occupies residues 239-260; it reads VQSLEQQLVLEKEKLSAMQAHL. Residues Lys-250 and Lys-252 each participate in a glycyl lysine isopeptide (Lys-Gly) (interchain with G-Cter in ubiquitin) cross-link. N6-acetyllysine; alternate is present on residues Lys-263 and Lys-268. Glycyl lysine isopeptide (Lys-Gly) (interchain with G-Cter in ubiquitin); alternate cross-links involve residues Lys-263 and Lys-268. The segment at 278–336 is interaction with RUNX1; the sequence is GSCCIVAAGSQGSAVPAWSGPREAPDSLFAVRRHLWGSHGNSTFPEFLHNMDYFKFHNM. Positions 337 to 423 form a DNA-binding region, fork-head; that stretch reads RPPFTYATLI…RKKRSQRPSR (87 aa). A Glycyl lysine isopeptide (Lys-Gly) (interchain with G-Cter in ubiquitin) cross-link involves residue Lys-393. The short motif at 414 to 417 is the Nuclear localization signal element; sequence RKKR. Ser-418 is modified (phosphoserine). A propeptide spanning residues 418–431 is cleaved from the precursor; the sequence is SQRPSRCSNPTPGP.

As to quaternary structure, homodimer. Dimerization is essential for its transcriptional regulator activity. Interacts with IKZF3. Interacts (via LXXLL motif) with RORA (via AF-2 motif). Interacts with HDAC9 in the absence of T-cell stimulation. Interacts with PPP1CA, PPP1CB, PPP1CG, KAT5, HDAC7, HSPA8, USP7, STUB1, HSPA1A/B, RUNX1, RUNX2, RUNX3, RELA, NFATC2, IKFZ4 and RORC. In terms of processing, phosphorylation at Ser-418 regulates its transcriptional repressor activity and consequently, regulatory T-cells (Treg) suppressive function. Phosphorylation by CDK2 negatively regulates its transcriptional activity and protein stability. Polyubiquitinated, leading to its proteasomal degradation in regulatory T-cells (Treg) which is mediated by STUB1 in a HSPA1A/B-dependent manner. Deubiquitinated by USP7 and USP44 leading to increase in protein stability. Post-translationally, acetylation on lysine residues stabilizes FOXP3 and promotes differentiation of T-cells into induced regulatory T-cells (iTregs) associated with suppressive functions. Acetylation is mediated by a coordinated action of KAT5 and EP300/p300 acetyltransferases: EP300/p300 is required to enhance KAT5 autoacetylation, promoting acetylation of FOXP3 by KAT5. Deacetylated by SIRT1. In terms of processing, undergoes proteolytic cleavage in activated regulatory T-cells (Treg), and can be cleaved at either the N- or C-terminal site, or at both sites.

The protein localises to the nucleus. It is found in the cytoplasm. In terms of biological role, transcriptional regulator which is crucial for the development and inhibitory function of regulatory T-cells (Treg). Plays an essential role in maintaining homeostasis of the immune system by allowing the acquisition of full suppressive function and stability of the Treg lineage, and by directly modulating the expansion and function of conventional T-cells. Can act either as a transcriptional repressor or a transcriptional activator depending on its interactions with other transcription factors, histone acetylases and deacetylases. The suppressive activity of Treg involves the coordinate activation of many genes, including CTLA4 and TNFRSF18 by FOXP3 along with repression of genes encoding cytokines such as interleukin-2 (IL2) and interferon-gamma (IFNG). Inhibits cytokine production and T-cell effector function by repressing the activity of two key transcription factors, RELA and NFATC2. Mediates transcriptional repression of IL2 via its association with histone acetylase KAT5 and histone deacetylase HDAC7. Can activate the expression of TNFRSF18, IL2RA and CTLA4 and repress the expression of IL2 and IFNG via its association with transcription factor RUNX1. Inhibits the differentiation of IL17 producing helper T-cells (Th17) by antagonizing RORC function, leading to down-regulation of IL17 expression, favoring Treg development. Inhibits the transcriptional activator activity of RORA. Can repress the expression of IL2 and IFNG via its association with transcription factor IKZF4. This Macaca fascicularis (Crab-eating macaque) protein is Forkhead box protein P3 (FOXP3).